Reading from the N-terminus, the 159-residue chain is Protein A40 (159 aa).

The Cytoplasmic segment spans residues 1-9; the sequence is MNKHKTDYA. A helical; Signal-anchor for type II membrane protein membrane pass occupies residues 10 to 30; it reads GYACCVICGLIVGIIFTATLL. The Extracellular segment spans residues 31 to 159; that stretch reads KVVERKLVHT…TPKLHSCYTI (129 aa). Residues 63 to 159 enclose the C-type lectin domain; the sequence is YNNKCIHLST…TPKLHSCYTI (97 aa).

Belongs to the poxviridae A40 protein family.

It localises to the host membrane. The chain is Protein A40 from Bos taurus (Bovine).